The sequence spans 219 residues: MSLGLVGRKVGMTRIFTAEGDSIPVTVLDVSDNRVTQIKTVETDGYTAVQVAFGSRRASRVTKPLAGHLAKAGVQTGEILKEFRIEADKAAELSNGAVIGPDLFEVGQKVDVQGVSIGKGYAGTIKRYNFGSGRASHGNSRSHNVPGSIGMAQDPGRVFPGKRMTGHMGDETVTVQNLEIARIDADRKLLLVKGAVPGAKGGKVFVTPAVKTRAVKGAK.

Residues 133 to 153 are disordered; that stretch reads GRASHGNSRSHNVPGSIGMAQ. Glutamine 153 is modified (N5-methylglutamine).

Belongs to the universal ribosomal protein uL3 family. In terms of assembly, part of the 50S ribosomal subunit. Forms a cluster with proteins L14 and L19. Post-translationally, methylated by PrmB.

Functionally, one of the primary rRNA binding proteins, it binds directly near the 3'-end of the 23S rRNA, where it nucleates assembly of the 50S subunit. The polypeptide is Large ribosomal subunit protein uL3 (Burkholderia thailandensis (strain ATCC 700388 / DSM 13276 / CCUG 48851 / CIP 106301 / E264)).